The sequence spans 4923 residues: Bridge-like lipid transfer protein family member 1 (4923 aa).

A helical membrane pass occupies residues 25–45; the sequence is FVWLLVATIMSCGWIIYLTYY. Disordered stretches follow at residues 160-179, 606-631, 1203-1277, 1300-1334, 1357-1400, 1471-1494, 1630-1660, 1878-1948, 2191-2235, 2262-2281, 2355-2375, 2550-2655, 2885-2910, 3564-3596, 3645-3695, 3739-3797, 3848-3884, 4017-4071, 4102-4124, 4249-4309, and 4797-4827; these read NRDE…SVHI, HSKS…KPRW, SLHV…SARL, FSSE…DSST, TEEF…SVEG, TNKR…SEES, SAAK…DLSI, RDGV…PDSS, SKSH…LQCN, PHRA…RTGN, NTLD…QEDL, RYTA…SEQS, IRQP…VSIN, YSNS…IKVE, FSPT…RKSA, LHPS…SLQS, GMRD…AKGK, PTSA…TGPP, AVTG…SSVT, DGQT…AAAQ, and RMFA…EKEE. Residues 1210–1226 are compositionally biased toward low complexity; it reads SHSSASSSEENSSSSAA. Positions 1237–1248 are enriched in polar residues; it reads PSPSTELMNVTT. Residues 1260-1271 show a composition bias toward low complexity; it reads SPLRSPLKRQSS. The span at 1641–1658 shows a compositional bias: polar residues; sequence TEGTTPGSLSTPHGQTDL. Positions 1887–1898 are enriched in low complexity; sequence SSGSQTGSGYST. Residues 1907-1920 are compositionally biased toward polar residues; that stretch reads NDAQSPASEPNNNS. The segment covering 1921-1931 has biased composition (acidic residues); it reads DSDEQDEGVES. Polar residues-rich tracts occupy residues 2208-2218 and 2267-2281; these read PYQSLSYTSGD and EQTA…RTGN. A compositionally biased stretch (polar residues) spans 2550–2560; the sequence is RYTAGSSSPTP. Basic and acidic residues predominate over residues 2606–2624; it reads TRSREPRGRGTLGRSERRT. A compositionally biased stretch (basic and acidic residues) spans 3581–3595; sequence KRSDRPREDLPDIKV. Over residues 3746–3770 the composition is skewed to basic and acidic residues; sequence TEHEDLALRRSCERSSRSLDQDSPP. The segment covering 4017-4039 has biased composition (polar residues); it reads PTSATYPSEGQHTPSSTPPSVHN. The segment covering 4044 to 4056 has biased composition (low complexity); sequence PGGPSTGLGSPLG. 3 stretches are compositionally biased toward polar residues: residues 4249 to 4268, 4276 to 4286, and 4804 to 4814; these read DGQT…TPSH, TGRTRSVSDSS, and GQKSPTTQQDE. The segment covering 4816-4827 has biased composition (basic and acidic residues); it reads SSDKKEEREKEE.

It is found in the cell membrane. It localises to the endoplasmic reticulum membrane. Its subcellular location is the mitochondrion membrane. Its function is as follows. Tube-forming lipid transport protein which provides phosphatidylethanolamine for glycosylphosphatidylinositol (GPI) anchor synthesis in the endoplasmic reticulum. Plays a role in endosomal trafficking and endosome recycling. Also involved in the actin cytoskeleton and cilia structural dynamics. Acts as a regulator of phagocytosis. This Danio rerio (Zebrafish) protein is Bridge-like lipid transfer protein family member 1 (bltp1).